A 409-amino-acid polypeptide reads, in one-letter code: Pyrophosphate--fructose 6-phosphate 1-phosphotransferase (409 aa).

Gly14 contacts diphosphate. Asp123 is a Mg(2+) binding site. Substrate-binding positions include 151-153 (TVD), 196-198 (MGR), Glu268, and 325-328 (YFAR). The active-site Proton acceptor is the Asp153.

Belongs to the phosphofructokinase type A (PFKA) family. PPi-dependent PFK group II subfamily. Clade 'P' sub-subfamily. In terms of assembly, homodimer. The cofactor is Mg(2+).

It is found in the cytoplasm. The enzyme catalyses beta-D-fructose 6-phosphate + diphosphate = beta-D-fructose 1,6-bisphosphate + phosphate + H(+). It functions in the pathway carbohydrate degradation; glycolysis; D-glyceraldehyde 3-phosphate and glycerone phosphate from D-glucose: step 3/4. Non-allosteric. In terms of biological role, catalyzes the phosphorylation of D-fructose 6-phosphate, the first committing step of glycolysis. Uses inorganic phosphate (PPi) as phosphoryl donor instead of ATP like common ATP-dependent phosphofructokinases (ATP-PFKs), which renders the reaction reversible, and can thus function both in glycolysis and gluconeogenesis. Consistently, PPi-PFK can replace the enzymes of both the forward (ATP-PFK) and reverse (fructose-bisphosphatase (FBPase)) reactions. The polypeptide is Pyrophosphate--fructose 6-phosphate 1-phosphotransferase (Methylomonas methanica).